Reading from the N-terminus, the 547-residue chain is Sodium-coupled neutral amino acid transporter 4 (547 aa).

The interval 1–30 is disordered; that stretch reads MDPMELRNVNIEPDDESSSGESAPDSYIGI. Residues 1–104 are Extracellular-facing; the sequence is MDPMELRNVN…GLSYAMANTG (104 aa). The residue at position 49 (S49) is a Phosphoserine. The helical transmembrane segment at 105–125 threads the bilayer; sequence IILFIIMLLAVAILSLYSVHL. Over 126-151 the chain is Cytoplasmic; the sequence is LLKTAKEGGSLIYEKLGEKAFGWPGK. The chain crosses the membrane as a helical span at residues 152 to 172; that stretch reads IGAFVSITMQNIGAMSSYLFI. The Extracellular portion of the chain corresponds to 173 to 195; it reads IKYELPEVIRAFMGLEENTGEWY. Residues 196 to 216 form a helical membrane-spanning segment; that stretch reads LNGNYLIIFVSVGIILPLSLL. Residues 217–220 are Cytoplasmic-facing; that stretch reads KNLG. A helical transmembrane segment spans residues 221–241; sequence YLGYTSGFSLTCMVFFVSVVI. Topologically, residues 242–332 are extracellular; sequence YKKFQIPCPL…PKYFVFNSRT (91 aa). The cysteines at positions 249 and 321 are disulfide-linked. 3 N-linked (GlcNAc...) asparagine glycosylation sites follow: N260, N264, and N276. The chain crosses the membrane as a helical span at residues 333–353; sequence AYAIPILVFAFVCHPEVLPIY. Residues 354 to 369 are Cytoplasmic-facing; sequence SELKDRSRRKMQTVSN. A helical transmembrane segment spans residues 370–390; it reads ISITGMLVMYLLAALFGYLTF. Topologically, residues 391–411 are extracellular; it reads YGEVEDELLHAYSKVYTLDIP. The helical transmembrane segment at 412-432 threads the bilayer; it reads LLMVRLAVLVAVTLTVPIVLF. Residues 433–453 lie on the Cytoplasmic side of the membrane; it reads PIRTSVITLLFPKRPFSWIRH. Residues 454-474 form a helical membrane-spanning segment; that stretch reads FLIAAVLIALNNVLVILVPTI. Topologically, residues 475 to 476 are extracellular; the sequence is KY. A helical membrane pass occupies residues 477–497; it reads IFGFIGASSATMLIFILPAVF. The Cytoplasmic portion of the chain corresponds to 498–514; that stretch reads YLKLVKKETFRSPQKVG. Residues 515–535 form a helical membrane-spanning segment; sequence ALIFLVVGIFFMIGSMALIII. Residues 536-547 lie on the Extracellular side of the membrane; it reads DWIYDPPNSKHH.

This sequence belongs to the amino acid/polyamine transporter 2 family. The disulfide bond plays an important role in substrate transport, but has no effect on trafficking to the cell surface. Expressed almost exclusively in embryonic and adult liver, and at lower levels in the kidney. Expressed at lower levels in adult muscle and pancreas. Detected in fetal blood vessels. Expressed in syncytiotrophoblas of placenta during first trimester and at term. Highly expressed in first trimester placenta compared to term placenta.

The protein localises to the cell membrane. It is found in the cell projection. Its subcellular location is the microvillus membrane. It catalyses the reaction L-methionine(in) + Na(+)(in) = L-methionine(out) + Na(+)(out). The catalysed reaction is L-asparagine(in) + Na(+)(in) = L-asparagine(out) + Na(+)(out). It carries out the reaction L-threonine(in) + Na(+)(in) = L-threonine(out) + Na(+)(out). The enzyme catalyses L-serine(in) + Na(+)(in) = L-serine(out) + Na(+)(out). It catalyses the reaction glycine(in) + Na(+)(in) = glycine(out) + Na(+)(out). The catalysed reaction is L-alanine(in) + Na(+)(in) = L-alanine(out) + Na(+)(out). It carries out the reaction L-glutamine(in) + Na(+)(in) = L-glutamine(out) + Na(+)(out). The enzyme catalyses L-histidine(in) + Na(+)(in) = L-histidine(out) + Na(+)(out). It catalyses the reaction L-cysteine(in) + Na(+)(in) = L-cysteine(out) + Na(+)(out). The catalysed reaction is L-proline(in) + Na(+)(in) = L-proline(out) + Na(+)(out). In terms of biological role, symporter that cotransports neutral amino acids and sodium ions from the extraccellular to the intracellular side of the cell membrane. The transport is electrogenic, pH dependent and partially tolerates substitution of Na(+) by Li(+). Preferentially transports smaller amino acids, such as glycine, L-alanine, L-serine, L-asparagine and L-threonine, followed by L-cysteine, L-histidine, L-proline and L-glutamine and L-methionine. This chain is Sodium-coupled neutral amino acid transporter 4, found in Homo sapiens (Human).